The primary structure comprises 182 residues: Large ribosomal subunit protein uL16 (182 aa).

This sequence belongs to the universal ribosomal protein uL16 family.

In Pyrobaculum neutrophilum (strain DSM 2338 / JCM 9278 / NBRC 100436 / V24Sta) (Thermoproteus neutrophilus), this protein is Large ribosomal subunit protein uL16.